Consider the following 557-residue polypeptide: Inositol-3-phosphate synthase 1 (557 aa).

Positions 67, 68, 69, 70, 141, 177, 178, 188, 191, 228, 229, 230, 231, 278, 279, 303, 306, 337, 338, 339, and 352 each coordinate NAD(+). S279 carries the phosphoserine modification. The residue at position 357 (S357) is a Phosphoserine. Residues G390, D391, D419, and S420 each coordinate NAD(+). The disordered stretch occupies residues 514–557 (GIKPEEVKATSPLPCKKESTPATNGCTGDANGHTQAPTPELSTA). S524 is subject to Phosphoserine. Residues 533 to 557 (TPATNGCTGDANGHTQAPTPELSTA) are compositionally biased toward polar residues.

This sequence belongs to the myo-inositol 1-phosphate synthase family. In terms of assembly, homotrimer. NAD(+) serves as cofactor. In terms of processing, phosphorylation at Ser-524 does not appear to affect enzyme activity, and is detected in brain and testis. In terms of tissue distribution, expressed in testis, brain and epididymis (at protein level). Moderately expressed in brain, lung, liver, and kidney. Low expression in heart and spleen. Very low expression in skeletal muscle. Expressed in testis, spleen, heart, brainstem, hippocampus, cerebellum, cortex and amygdala. Absent or very lowly expressed in intestine, lung and muscle. As to expression, expressed in intestine, lung, liver, muscle, testis, spleen, brainstem, hippocampus, cerebellum, cortex and amygdala. Absent or lowly expressed in heart and kidney. In terms of tissue distribution, expressed in intestine (at protein level).

The protein localises to the cytoplasm. The enzyme catalyses D-glucose 6-phosphate = 1D-myo-inositol 3-phosphate. Its pathway is polyol metabolism; myo-inositol biosynthesis; myo-inositol from D-glucose 6-phosphate: step 1/2. Its activity is regulated as follows. Inhibited by 2-deoxyglucitol 6-phosphate (dgtolP) and 2-deoxy-D-glucose 6-phosphate. Inhibited by copper, mercury, cadmium, zinc and copper ions. Activated by potassium and ammonium ions. Its function is as follows. Key enzyme in myo-inositol biosynthesis pathway that catalyzes the conversion of glucose 6-phosphate to 1-myo-inositol 1-phosphate in a NAD-dependent manner. Rate-limiting enzyme in the synthesis of all inositol-containing compounds. Functionally, key enzyme in myo-inositol biosynthesis pathway that catalyzes the conversion of glucose 6-phosphate to 1-myo-inositol 1-phosphate in a NAD-dependent manner. Competitively inhibits the function of isoform 1, presumably by competing for NAD cofactor. This chain is Inositol-3-phosphate synthase 1 (Isyna1), found in Rattus norvegicus (Rat).